We begin with the raw amino-acid sequence, 177 residues long: Large ribosomal subunit protein bL9 (177 aa).

Belongs to the bacterial ribosomal protein bL9 family.

Functionally, binds to the 23S rRNA. The chain is Large ribosomal subunit protein bL9 from Rhodopirellula baltica (strain DSM 10527 / NCIMB 13988 / SH1).